The chain runs to 267 residues: Thiazole synthase (267 aa).

Lys-107 serves as the catalytic Schiff-base intermediate with DXP. 1-deoxy-D-xylulose 5-phosphate-binding positions include Gly-168, Ala-194 to Gly-195, and Asn-216 to Thr-217.

This sequence belongs to the ThiG family. Homotetramer. Forms heterodimers with either ThiH or ThiS.

The protein resides in the cytoplasm. The catalysed reaction is [ThiS sulfur-carrier protein]-C-terminal-Gly-aminoethanethioate + 2-iminoacetate + 1-deoxy-D-xylulose 5-phosphate = [ThiS sulfur-carrier protein]-C-terminal Gly-Gly + 2-[(2R,5Z)-2-carboxy-4-methylthiazol-5(2H)-ylidene]ethyl phosphate + 2 H2O + H(+). It participates in cofactor biosynthesis; thiamine diphosphate biosynthesis. Catalyzes the rearrangement of 1-deoxy-D-xylulose 5-phosphate (DXP) to produce the thiazole phosphate moiety of thiamine. Sulfur is provided by the thiocarboxylate moiety of the carrier protein ThiS. In vitro, sulfur can be provided by H(2)S. This is Thiazole synthase from Aquifex aeolicus (strain VF5).